The primary structure comprises 158 residues: C-type lectin BiL (158 aa).

Positions 1-23 are cleaved as a signal peptide; sequence MGRFIFVSFGLLVVFLSLSGAKG. Cystine bridges form between Cys26–Cys37, Cys54–Cys154, Cys61–Cys156, and Cys129–Cys146. The C-type lectin domain maps to 33 to 155; it reads MNGLCYKIFD…CESKNAFLCQ (123 aa). Ca(2+) contacts are provided by Gln119, Asp121, Glu127, Asn142, and Asp143. Residues 119-121 carry the Galactose-binding motif; that stretch reads QPD.

In terms of assembly, homodimer; disulfide-linked. As to expression, expressed by the venom gland.

The protein localises to the secreted. Lectin with a hemagglutinating activity that is inhibited by galactose, lactose and EDTA. Is calcium-dependent. Shows effects on the renal function of isolated perfused rat kidneys by increasing both perfusion pressure (PP) and renal vascular resistance (RVR). In addition, the urinary flow and glomerular filtration rate (GFR) decreases significantly. The changes observed may reflect direct injury to the glomerular and tubular renal cells, and the rise in permeability in the glomerular endothelial cells, may be the effect of interactions of C-type lectin with endothelial cells or due to release of other mediators by mesangial, tubular and endothelial cells. The polypeptide is C-type lectin BiL (Bothrops insularis (Golden lancehead)).